The primary structure comprises 214 residues: Small ribosomal subunit protein uS2 (214 aa).

Belongs to the universal ribosomal protein uS2 family.

This Methanococcoides burtonii (strain DSM 6242 / NBRC 107633 / OCM 468 / ACE-M) protein is Small ribosomal subunit protein uS2.